The primary structure comprises 122 residues: Large ribosomal subunit protein bL12 (122 aa).

Belongs to the bacterial ribosomal protein bL12 family. As to quaternary structure, homodimer. Part of the ribosomal stalk of the 50S ribosomal subunit. Forms a multimeric L10(L12)X complex, where L10 forms an elongated spine to which 2 to 4 L12 dimers bind in a sequential fashion. Binds GTP-bound translation factors.

Its function is as follows. Forms part of the ribosomal stalk which helps the ribosome interact with GTP-bound translation factors. Is thus essential for accurate translation. This chain is Large ribosomal subunit protein bL12, found in Stenotrophomonas maltophilia (strain K279a).